Consider the following 388-residue polypeptide: Adenosine deaminase-like protein (388 aa).

Residues 1–13 show a composition bias toward basic residues; it reads MPNNSKHKKKQQR. The tract at residues 1–34 is disordered; it reads MPNNSKHKKKQQRRQQEAQKKSRAKQIETDKKND. The segment covering 14–34 has biased composition (basic and acidic residues); the sequence is RQQEAQKKSRAKQIETDKKND. Residues His-65 and His-67 each contribute to the Zn(2+) site. Residues His-67, His-114, 146–149, Asp-186, and Gly-218 each bind N(6)-methyl-AMP; that span reads TSPK. His-245 contacts Zn(2+). Positions 248, 326, and 327 each coordinate N(6)-methyl-AMP. Catalysis depends on Glu-248, which acts as the Proton donor. Asp-326 serves as a coordination point for Zn(2+).

It belongs to the metallo-dependent hydrolases superfamily. Adenosine and AMP deaminases family. In terms of assembly, monomer. Zn(2+) serves as cofactor.

It catalyses the reaction N(6)-methyl-AMP + H2O + H(+) = IMP + methylamine. In terms of biological role, catalyzes the hydrolysis of the free cytosolic methylated adenosine nucleotide N(6)-methyl-AMP (N6-mAMP) to produce inositol monophosphate (IMP) and methylamine. Is required for the catabolism of cytosolic N6-mAMP, which is derived from the degradation of mRNA containing N6-methylated adenine (m6A). The sequence is that of Adenosine deaminase-like protein from Caenorhabditis elegans.